The primary structure comprises 244 residues: Probable transcriptional regulatory protein Xfasm12_1059 (244 aa).

This sequence belongs to the TACO1 family.

It localises to the cytoplasm. In Xylella fastidiosa (strain M12), this protein is Probable transcriptional regulatory protein Xfasm12_1059.